The chain runs to 154 residues: 3-hydroxyacyl-[acyl-carrier-protein] dehydratase FabZ (154 aa).

H57 is an active-site residue.

This sequence belongs to the thioester dehydratase family. FabZ subfamily.

It localises to the cytoplasm. It carries out the reaction a (3R)-hydroxyacyl-[ACP] = a (2E)-enoyl-[ACP] + H2O. Functionally, involved in unsaturated fatty acids biosynthesis. Catalyzes the dehydration of short chain beta-hydroxyacyl-ACPs and long chain saturated and unsaturated beta-hydroxyacyl-ACPs. This chain is 3-hydroxyacyl-[acyl-carrier-protein] dehydratase FabZ, found in Sinorhizobium fredii (strain NBRC 101917 / NGR234).